Reading from the N-terminus, the 764-residue chain is FAST kinase domain-containing protein 5, mitochondrial (764 aa).

Position 95 is a phosphoserine (S95). Residue K507 is modified to N6-acetyllysine. Positions 697 to 757 (LAIQFTNRNQ…RLEKLAFLHE (61 aa)) constitute an RAP domain.

Belongs to the FAST kinase family. In terms of assembly, found in a complex with GRSF1, DDX28, DHX30 and FASTKD2. Associates with the 12S mitochondrial rRNA (12S mt-rRNA).

The protein resides in the mitochondrion matrix. It localises to the mitochondrion nucleoid. Functionally, plays an important role in the processing of non-canonical mitochondrial mRNA precursors. This is FAST kinase domain-containing protein 5, mitochondrial (FASTKD5) from Macaca fascicularis (Crab-eating macaque).